We begin with the raw amino-acid sequence, 416 residues long: ABSCISIC ACID-INSENSITIVE 5-like protein 5 (416 aa).

Residues 1-23 form a disordered region; sequence MDGSMNLGNEPPGDGGGGGGLTR. The segment covering 13–22 has biased composition (gly residues); the sequence is GDGGGGGGLT. Residues S26, S45, and S86 each carry the phosphoserine modification. T135 carries the phosphothreonine modification. Positions 300-326 are disordered; the sequence is SEGIGKSNGDSSSLSPSPYMFNGGVRG. A bZIP domain is found at 336–399; that stretch reads VERRQRRMIK…KNQETEMRNL (64 aa). Positions 338–357 are basic motif; sequence RRQRRMIKNRESAARSRARK. Residues 364-385 form a leucine-zipper region; it reads LEAEVAKLKEENDELQRKQARI. A disordered region spans residues 388–416; that stretch reads MQKNQETEMRNLLQGGPKKKLRRTESGPW.

This sequence belongs to the bZIP family. ABI5 subfamily. As to quaternary structure, DNA-binding heterodimer. Interacts with ARIA. Post-translationally, the activation by phosphorylation is induced by abscisic acid (ABA). Phosphorylated by SRK2C, SRK2D, SRK2E, SRK2F and SRK2I in vitro. In terms of tissue distribution, expressed in roots, leaves, flowers and siliques but not in seeds.

The protein resides in the nucleus. In terms of biological role, involved in ABA and stress responses and acts as a positive component of glucose signal transduction. Functions as a transcriptional activator in the ABA-inducible expression of rd29B. Binds specifically to the ABA-responsive element (ABRE) of the rd29B gene promoter. This chain is ABSCISIC ACID-INSENSITIVE 5-like protein 5 (ABF2), found in Arabidopsis thaliana (Mouse-ear cress).